A 907-amino-acid chain; its full sequence is Phototropin-2 (907 aa).

The disordered stretch occupies residues A28–D84. Residues S41 to A51 are compositionally biased toward polar residues. One can recognise a PAS 1 domain in the interval V89–G162. FMN contacts are provided by residues N138–Q143, R156, N171, N181, and Q202. The residue at position 139 (C139) is an S-4a-FMN cysteine. Residues R163 to M217 form the PAC 1 domain. Residues R332–S363 form a disordered region. The PAS 2 domain occupies Q375 to Q448. Residues N424–Q429, R442, N457, N467, and Q488 each bind FMN. An S-4a-FMN cysteine modification is found at C425. One can recognise a PAC 2 domain in the interval K449 to S503. The Protein kinase domain maps to F576 to F863. Residues L582 to V590 and K605 each bind ATP. Catalysis depends on D701, which acts as the Proton acceptor.

Belongs to the protein kinase superfamily. Ser/Thr protein kinase family. Homodimer. It depends on FMN as a cofactor. Post-translationally, autophosphorylated in response to blue light irradiation. In terms of processing, 2 molecules of FMN bind covalently to cysteines after exposure to blue light and are reversed in the dark. Expressed at low levels in leaves of dark-grown seedlings.

It carries out the reaction L-seryl-[protein] + ATP = O-phospho-L-seryl-[protein] + ADP + H(+). The catalysed reaction is L-threonyl-[protein] + ATP = O-phospho-L-threonyl-[protein] + ADP + H(+). Functionally, protein kinase that acts as a blue light photoreceptor in a signal-transduction pathway for phototropic responses. Regulates a wide range of physiological activities in plants that maximize the efficiency of photosynthesis, such as chloroplast relocations, stomata opening, and leaf expansion. The polypeptide is Phototropin-2 (PHOT2) (Oryza sativa subsp. japonica (Rice)).